The chain runs to 402 residues: Putative cytochrome P450 133B1 (402 aa).

C348 contributes to the heme binding site.

This sequence belongs to the cytochrome P450 family. It depends on heme as a cofactor.

The chain is Putative cytochrome P450 133B1 (cyp133B1) from Xylella fastidiosa (strain 9a5c).